The following is a 462-amino-acid chain: Toxin CfTX-2 (462 aa).

The first 17 residues, 1 to 17, serve as a signal peptide directing secretion; the sequence is MILVSLLPLLFMTGIAS.

Belongs to the jellyfish toxin family. Type I subfamily. In terms of assembly, oligomer. Contains disulfide bonds. In terms of tissue distribution, nematocytes.

It localises to the secreted. Its subcellular location is the nematocyst. The protein resides in the target cell membrane. In terms of biological role, may cause profound effects on the cardiovascular system of anesthetized rats (at 25 ug/kg), since the fraction containing this toxin and CfTX-1 produces an initial increase in mean arterial pressure, followed by cardiovascular collapse in all animals within 1 minute of injection. To note, the same fraction does not induce significant change in heart rate. Has weak hemolytic activity. Is lethal to crayfish. Causes cutaneous inflammation in humans. May act as a pore-forming toxin, disrupting normal transmembrane ion concentration gradients in susceptible cells. This Chironex fleckeri (Australian box jellyfish) protein is Toxin CfTX-2.